We begin with the raw amino-acid sequence, 327 residues long: E3 ubiquitin ligase Rnf121 (327 aa).

Ala2 is modified (N-acetylalanine). 5 consecutive transmembrane segments (helical) span residues 50-70, 79-99, 100-120, 148-168, and 172-192; these read MHAE…LLLV, SYNM…TVKL, HWWR…FVTF, ATGI…NLLF, and PEDA…YGVL. The RING-type; atypical zinc finger occupies 226–276; sequence CAVCGQQIFVDVNEEGIIENTYRLSCNHVFHEFCIRGWCIVGKKQTCPYCK. The chain crosses the membrane as a helical span at residues 306–326; that stretch reads LVAWQPVIIGLVQGISYILGL.

The protein belongs to the RNF121 family.

It localises to the endoplasmic reticulum membrane. It catalyses the reaction S-ubiquitinyl-[E2 ubiquitin-conjugating enzyme]-L-cysteine + [acceptor protein]-L-lysine = [E2 ubiquitin-conjugating enzyme]-L-cysteine + N(6)-ubiquitinyl-[acceptor protein]-L-lysine.. Its pathway is protein modification; protein ubiquitination. In terms of biological role, E3 ubiquitin ligase which accepts ubiquitin and transfers it to substrates thereby promoting their degradation by the endoplasmic reticulum-associated degradation (ERAD) pathway which is a pathway involved in ubiquitin-dependent degradation of misfolded endoplasmic reticulum proteins. May regulate the unfolded protein response to reduce endoplasmic reticulum stress. The protein is E3 ubiquitin ligase Rnf121 (Rnf121) of Mus musculus (Mouse).